Reading from the N-terminus, the 490-residue chain is One cut domain family member 3 (490 aa).

3 disordered regions span residues Gly-130–Ala-155, Leu-193–Pro-213, and His-287–Glu-316. Over residues Ala-143–Gln-152 the composition is skewed to pro residues. The span at His-290–Ala-311 shows a compositional bias: gly residues. The CUT DNA-binding region spans Pro-309 to Ala-395. A DNA-binding region (homeobox) is located at residues Pro-411–Trp-470.

Belongs to the CUT homeobox family. In terms of tissue distribution, specifically expressed in brain, stomach and gut. Within the gut, expressed only in duodenum and jejunum.

It localises to the nucleus. In terms of biological role, transcriptional activator. Binds the consensus DNA sequence 5'-DHWATTGAYTWWD-3' on a variety of gene promoters such as those of HNF3B and TTR. The protein is One cut domain family member 3 (Onecut3) of Mus musculus (Mouse).